Reading from the N-terminus, the 79-residue chain is Probable [Fe-S]-dependent transcriptional repressor (79 aa).

Iron-sulfur cluster is bound by residues Cys-56, Cys-61, Cys-64, and Cys-71.

Belongs to the FeoC family.

May function as a transcriptional regulator that controls feoABC expression. This chain is Probable [Fe-S]-dependent transcriptional repressor, found in Klebsiella pneumoniae (strain 342).